A 281-amino-acid chain; its full sequence is Large ribosomal subunit protein uL2 (281 aa).

The disordered stretch occupies residues 213–281 (RNRHKGIRPT…LIIRRRKESK (69 aa)).

It belongs to the universal ribosomal protein uL2 family. As to quaternary structure, part of the 50S ribosomal subunit. Forms a bridge to the 30S subunit in the 70S ribosome.

Functionally, one of the primary rRNA binding proteins. Required for association of the 30S and 50S subunits to form the 70S ribosome, for tRNA binding and peptide bond formation. It has been suggested to have peptidyltransferase activity; this is somewhat controversial. Makes several contacts with the 16S rRNA in the 70S ribosome. This is Large ribosomal subunit protein uL2 from Mycoplasmopsis pulmonis (strain UAB CTIP) (Mycoplasma pulmonis).